Consider the following 495-residue polypeptide: Probable cytosol aminopeptidase (495 aa).

K267 and D272 together coordinate Mn(2+). Residue K279 is part of the active site. Mn(2+) contacts are provided by D290, D349, and E351. The active site involves R353.

Belongs to the peptidase M17 family. Mn(2+) serves as cofactor.

It localises to the cytoplasm. It carries out the reaction Release of an N-terminal amino acid, Xaa-|-Yaa-, in which Xaa is preferably Leu, but may be other amino acids including Pro although not Arg or Lys, and Yaa may be Pro. Amino acid amides and methyl esters are also readily hydrolyzed, but rates on arylamides are exceedingly low.. The enzyme catalyses Release of an N-terminal amino acid, preferentially leucine, but not glutamic or aspartic acids.. In terms of biological role, presumably involved in the processing and regular turnover of intracellular proteins. Catalyzes the removal of unsubstituted N-terminal amino acids from various peptides. This Histophilus somni (strain 2336) (Haemophilus somnus) protein is Probable cytosol aminopeptidase.